The primary structure comprises 239 residues: Lactate utilization protein A (239 aa).

This sequence belongs to the LutA/YkgE family.

Is involved in L-lactate degradation and allows cells to grow with lactate as the sole carbon source. The chain is Lactate utilization protein A from Bacillus cytotoxicus (strain DSM 22905 / CIP 110041 / 391-98 / NVH 391-98).